The following is a 422-amino-acid chain: E3 ubiquitin-protein ligase CBLL2 (422 aa).

Residues 54 to 94 form an RING-type zinc finger; that stretch reads CDKCDLPIKIYGRIIPCKHAFCYNCANLYDKIGYKICPRCS. The segment at 93–151 is HYB domain; the sequence is CSYPVLRIEEHKRGSVFMCSVVQGCKRTYLSQKSLQAHIKRRHKRARKQVASASLEKLR. The C2H2-type zinc-finger motif lies at 109-135; sequence FMCSVVQGCKRTYLSQKSLQAHIKRRH. Disordered stretches follow at residues 190–213 and 378–422; these read MQQMPHEQHNQPHKDLQVPPPELS and QTDA…HRPY. The span at 195–205 shows a compositional bias: basic and acidic residues; it reads HEQHNQPHKDL. The segment covering 393-405 has biased composition (pro residues); sequence LPPPPPTWSPPPS. Basic residues predominate over residues 410-422; sequence GSHHSYQRRHRPY.

As to quaternary structure, homodimer.

The protein resides in the cytoplasm. The enzyme catalyses S-ubiquitinyl-[E2 ubiquitin-conjugating enzyme]-L-cysteine + [acceptor protein]-L-lysine = [E2 ubiquitin-conjugating enzyme]-L-cysteine + N(6)-ubiquitinyl-[acceptor protein]-L-lysine.. It functions in the pathway protein modification; protein ubiquitination. E3 ubiquitin ligase catalyzing the covalent attachment of ubiquitin moieties onto substrate proteins. May operate on tyrosine-phosphorylated SRC substrates. The sequence is that of E3 ubiquitin-protein ligase CBLL2 (CBLL2) from Macaca fascicularis (Crab-eating macaque).